Reading from the N-terminus, the 128-residue chain is Small ribosomal subunit protein bS6 (128 aa).

This sequence belongs to the bacterial ribosomal protein bS6 family.

Its function is as follows. Binds together with bS18 to 16S ribosomal RNA. In Nitratiruptor sp. (strain SB155-2), this protein is Small ribosomal subunit protein bS6.